Reading from the N-terminus, the 1229-residue chain is Putative cell division cycle ATPase (1229 aa).

Low complexity predominate over residues 252 to 267 (GKKNNNGNVKKGIKNV). The tract at residues 252 to 315 (GKKNNNGNVK…GGKNNSYYNE (64 aa)) is disordered. Over residues 268–281 (PMDEKSYSPNDHDN) the composition is skewed to basic and acidic residues. The span at 282–314 (NSNNSNNNNNNDNNNSNNNNNNNNGGKNNSYYN) shows a compositional bias: low complexity. ATP is bound at residue 568 to 575 (GIPGTGKT). 2 disordered regions span residues 814-837 (TLLQ…DALD) and 860-892 (FSND…KNER). Basic and acidic residues-rich tracts occupy residues 819-837 (DKNE…DALD) and 882-892 (NPNDKLDKNER). 975–982 (GPPGCGKT) lines the ATP pocket.

This sequence belongs to the AAA ATPase family.

The polypeptide is Putative cell division cycle ATPase (Plasmodium falciparum (isolate 3D7)).